Reading from the N-terminus, the 439-residue chain is 26S proteasome regulatory subunit 6A (439 aa).

The residue at position 1 (methionine 1) is an N-acetylmethionine. Phosphoserine is present on serine 9. Residue 227–234 (GPPGTGKT) participates in ATP binding. Serine 376 bears the Phosphoserine mark.

It belongs to the AAA ATPase family. As to quaternary structure, component of the 19S proteasome regulatory particle complex. The 26S proteasome consists of a 20S core particle (CP) and two 19S regulatory subunits (RP). The regulatory particle is made of a lid composed of 9 subunits, a base containing 6 ATPases including PSMC3 and few additional components. Interacts with PAAF1.

The protein resides in the cytoplasm. It localises to the nucleus. Its function is as follows. Component of the 26S proteasome, a multiprotein complex involved in the ATP-dependent degradation of ubiquitinated proteins. This complex plays a key role in the maintenance of protein homeostasis by removing misfolded or damaged proteins, which could impair cellular functions, and by removing proteins whose functions are no longer required. Therefore, the proteasome participates in numerous cellular processes, including cell cycle progression, apoptosis, or DNA damage repair. PSMC3 belongs to the heterohexameric ring of AAA (ATPases associated with diverse cellular activities) proteins that unfolds ubiquitinated target proteins that are concurrently translocated into a proteolytic chamber and degraded into peptides. The sequence is that of 26S proteasome regulatory subunit 6A (Psmc3) from Rattus norvegicus (Rat).